A 911-amino-acid polypeptide reads, in one-letter code: Protein SOSEKI (911 aa).

Residues 15–107 (TKVQVVYYLS…LVLKGSELYT (93 aa)) are DIX-like oligomerization domain. 2 disordered regions span residues 219 to 470 (SETL…TQCE) and 492 to 810 (LCGN…PPRI). Composition is skewed to basic and acidic residues over residues 253–286 (TDREHSYGPPRKTESMGRERSLPRDLPRSREVSR) and 295–407 (EAPR…EELP). The span at 414-423 (SPTCSESGDS) shows a compositional bias: polar residues. A compositionally biased stretch (low complexity) spans 452-467 (SSSTRSSTPSTSAAST). Residues 493 to 494 (CG) carry the Association to cell membranes motif. A compositionally biased stretch (low complexity) spans 511–527 (PLAAAAQPASGAVPQSP). Positions 591-607 (SGVNSAMATPFLQTENN) are enriched in polar residues. The span at 608-662 (SPSSSESSSAAVSSGKKPASISLSGTSDASDGGNGASSTASSSSEVQNNVSVKEV) shows a compositional bias: low complexity. Positions 663–683 (ITQQLPSPSSSEGRPSLNIDT) are enriched in polar residues. Over residues 696 to 709 (SDVRETVKTTRPDS) the composition is skewed to basic and acidic residues. The span at 722-733 (PVRTQLSSSPSF) shows a compositional bias: polar residues. A compositionally biased stretch (basic and acidic residues) spans 735 to 771 (KRIEDARARARSLVSKEIRSGESRSSKDLLKENDRVK). Residues 772–784 (TSSGSMRSGSTRT) are compositionally biased toward low complexity. The segment covering 785 to 805 (PNNKNGTTGAGSKTLSGTFNR) has biased composition (polar residues). Residues 864–893 (ILQECGQCGRTFKPDSLKVHMRGCHALRRS) form a C2HC/C3H-type zinc finger. Zn(2+)-binding residues include Cys-868, Cys-871, His-883, and Cys-887.

The protein belongs to the SOSEKI family. In terms of assembly, homodimer. Forms long polymer filaments with other SOKs proteins polymers crucial for polar localization and biological activity. Zn(2+) is required as a cofactor.

The protein localises to the cell membrane. Functionally, SOSEKI proteins locally interpret global polarity cues and can influence cell division orientation to coordinate cell polarization relative to body axes. The sequence is that of Protein SOSEKI from Marchantia polymorpha (Common liverwort).